Here is a 1103-residue protein sequence, read N- to C-terminus: PALM2-AKAP2 fusion protein (1103 aa).

2 disordered regions span residues 178–197 and 304–396; these read ESASNATETSGPDMTIKKPP and YNGT…SSRD. The span at 179–189 shows a compositional bias: polar residues; sequence SASNATETSGP. 3 positions are modified to phosphoserine: S322, S352, and S383. Low complexity predominate over residues 380–392; it reads VPVSPSSTTSSRC. Residue K405 forms a Glycyl lysine isopeptide (Lys-Gly) (interchain with G-Cter in SUMO1); alternate linkage. A Glycyl lysine isopeptide (Lys-Gly) (interchain with G-Cter in SUMO2); alternate cross-link involves residue K405. Residues 444–521 are a coiled coil; it reads EEMLELEKER…QKQLQQQQQQ (78 aa). Disordered regions lie at residues 483–544 and 566–662; these read EQLD…DKAK and NSRQ…SKLW. Residues 490–505 show a composition bias toward basic and acidic residues; sequence LESHKKYKERKERRAQ. The span at 506–521 shows a compositional bias: low complexity; that stretch reads QEQLLLQKQLQQQQQQ. The span at 522 to 531 shows a compositional bias: polar residues; it reads PPSQLCTAPA. The span at 533 to 544 shows a compositional bias: basic and acidic residues; it reads SHERASMIDKAK. Polar residues predominate over residues 566–579; the sequence is NSRQAVAKGQSTPR. Phosphoserine occurs at positions 567 and 624. Over residues 633–643 the composition is skewed to polar residues; the sequence is AAGSQGNTASQ. Phosphoserine is present on residues S692, S696, and S748. Polar residues predominate over residues 745-763; it reads QENSLADFSLPQTPQTDNP. Positions 745–794 are disordered; that stretch reads QENSLADFSLPQTPQTDNPSEGRGEGVSKSFSDHGFYSPSSTLGDSPLVD. T757 is subject to Phosphothreonine. Positions 797 to 810 are PKA-RII subunit binding domain; it reads LEYQAGLLVQNAIQ. The segment covering 817–829 has biased composition (basic and acidic residues); it reads VDKAVSKTSRDGA. Residues 817–907 form a disordered region; sequence VDKAVSKTSR…GPINMEETRP (91 aa). S862 is subject to Phosphoserine. Basic and acidic residues predominate over residues 865-886; sequence QEKRDVLPKILPAEDRALRERG. Residues 941 to 979 adopt a coiled-coil conformation; it reads KLRSRKQRTLSMIEEEIRAAQEREEELKRQRQVLQSTQS. 4 positions are modified to phosphoserine: S951, S979, S1009, and S1016. A disordered region spans residues 962–1035; sequence EREEELKRQR…AAGTQRPKNL (74 aa). The segment covering 976–990 has biased composition (polar residues); it reads STQSPRTKNAPSLPS.

Expressed in infantile heart and muscle, and fibroblasts.

It is found in the apical cell membrane. Its function is as follows. Binds to regulatory subunit (RII) of protein kinase A. May be involved in establishing polarity in signaling systems or in integrating PKA-RII isoforms with downstream effectors to capture, amplify and focus diffuse, trans-cellular signals carried by cAMP. Binds to and modulates the structure of the actin cytoskeleton. In Homo sapiens (Human), this protein is PALM2-AKAP2 fusion protein.